The primary structure comprises 386 residues: MAALQYLESQKNAHPELGEWYNSLADLYQKKLWHQLTLKLEQFIALSVFQAGDALIQLYNNFITDFETRINLLKLAHFAVVVSRQYPEKEAAVSYLEGVIEKLKATKESRINEPISYIETQIALFKLEQGDQKECKKILDDGKSLLDSMTDIDPSVYANFFWVSSQYHKVRQEFSEFYKNALLYLAYTSVDSLSESFKLDLAFDLSLSALLGENIYNFGELLAHPILKSLLGTNVEWLYHILQAFNHGDLVQYQELCRVHNASLSAQPALVENEKKLLEKINILCLIEIIFSRPAEDRTIPLSVIAERTKLSIEDVEHLLMKSLSVHLIEGILDQVNGTVYVSWAQPRVLGIPQIKSLRDQLDSWVDKVHTTLLSVEAETPDLVAA.

At A2 the chain carries N-acetylalanine. The region spanning 174 to 347 is the PCI domain; the sequence is FSEFYKNALL…GTVYVSWAQP (174 aa).

The protein belongs to the proteasome subunit S11 family. Component of the 19S regulatory particle (RP/PA700) lid subcomplex of the 26S proteasome. The 26S proteasome is composed of a core protease (CP), known as the 20S proteasome, capped at one or both ends by the 19S regulatory particle (RP/PA700). The RP/PA700 complex is composed of at least 17 different subunits in two subcomplexes, the base and the lid, which form the portions proximal and distal to the 20S proteolytic core, respectively. In terms of tissue distribution, ubiquitous with highest expression in flowers.

Acts as a regulatory subunit of the 26S proteasome which is involved in the ATP-dependent degradation of ubiquitinated proteins. This chain is 26S proteasome non-ATPase regulatory subunit 13 homolog B (RPN9B), found in Arabidopsis thaliana (Mouse-ear cress).